The chain runs to 165 residues: Nucleotide-binding protein Tfu_2672 (165 aa).

It belongs to the YajQ family.

Its function is as follows. Nucleotide-binding protein. The protein is Nucleotide-binding protein Tfu_2672 of Thermobifida fusca (strain YX).